Consider the following 143-residue polypeptide: Large ribosomal subunit protein uL13 (143 aa).

The protein belongs to the universal ribosomal protein uL13 family. Part of the 50S ribosomal subunit.

Functionally, this protein is one of the early assembly proteins of the 50S ribosomal subunit, although it is not seen to bind rRNA by itself. It is important during the early stages of 50S assembly. In Symbiobacterium thermophilum (strain DSM 24528 / JCM 14929 / IAM 14863 / T), this protein is Large ribosomal subunit protein uL13.